The sequence spans 90 residues: Cell division topological specificity factor 2 (90 aa).

It belongs to the MinE family.

Its function is as follows. Prevents the cell division inhibition by proteins MinC and MinD at internal division sites while permitting inhibition at polar sites. This ensures cell division at the proper site by restricting the formation of a division septum at the midpoint of the long axis of the cell. The polypeptide is Cell division topological specificity factor 2 (Syntrophomonas wolfei subsp. wolfei (strain DSM 2245B / Goettingen)).